The chain runs to 441 residues: S-adenosylmethionine synthase 1 (441 aa).

Position 9 (E9) interacts with Mg(2+). H15 lines the ATP pocket. A K(+)-binding site is contributed by E43. 2 residues coordinate L-methionine: E56 and Q99. ATP contacts are provided by residues D167 to K169, S235 to F238, D246, R252 to K253, A269, K273, and K277. Residue D246 coordinates L-methionine. K277 serves as a coordination point for L-methionine.

Belongs to the AdoMet synthase family. As to quaternary structure, homotetramer. The cofactor is Mn(2+). Mg(2+) serves as cofactor. It depends on Co(2+) as a cofactor. Requires K(+) as cofactor.

It localises to the cytoplasm. The catalysed reaction is L-methionine + ATP + H2O = S-adenosyl-L-methionine + phosphate + diphosphate. It functions in the pathway amino-acid biosynthesis; S-adenosyl-L-methionine biosynthesis; S-adenosyl-L-methionine from L-methionine: step 1/1. Its function is as follows. Catalyzes the formation of S-adenosylmethionine from methionine and ATP. The reaction comprises two steps that are both catalyzed by the same enzyme: formation of S-adenosylmethionine (AdoMet) and triphosphate, and subsequent hydrolysis of the triphosphate. This is S-adenosylmethionine synthase 1 (SAMS1) from Daucus carota (Wild carrot).